The following is a 541-amino-acid chain: EH domain-containing protein 4 (541 aa).

Met1 carries the N-acetylmethionine modification. Positions 1-20 (MFSWMGRQAGGRERSGGMDA) are disordered. Residue Ser15 is modified to Phosphoserine. Residues 58-289 (FENKPMILLV…DLFRDIQSLP (232 aa)) enclose the Dynamin-type G domain. Residues 68-75 (GQYSTGKT) form a G1 motif region. 68–75 (GQYSTGKT) contributes to the ATP binding site. Residues 94–95 (EP) form a G2 motif region. The tract at residues 156–159 (DSPG) is G3 motif. Ser162 bears the Phosphoserine mark. A G4 motif region spans residues 222–225 (NKAD). Lys223 is an ATP binding site. Position 246 (Val246) is a region of interest, G5 motif. Trp261 contributes to the ATP binding site. An EH domain is found at 447 to 535 (DKPVYDELFY…PHLVPPSHRK (89 aa)). At Tyr451 the chain carries Phosphotyrosine. Residue Ser459 is modified to Phosphoserine. The 36-residue stretch at 479 to 514 (LPNSVLGKIWKLADCDCDGMLDEEEFALAKHLIKIK) folds into the EF-hand domain. Positions 492, 494, 496, 498, and 503 each coordinate Ca(2+).

It belongs to the TRAFAC class dynamin-like GTPase superfamily. Dynamin/Fzo/YdjA family. EHD subfamily. As to quaternary structure, homooligomer, and heterooligomer with EHD1, EHD2 and EHD3. Forms a complex with EHD4 and MICALL1; the complex controls CDH5 trafficking and coordinates angiogenesis.

It is found in the early endosome membrane. Its subcellular location is the recycling endosome membrane. It localises to the cell membrane. The protein resides in the cell junction. The protein localises to the adherens junction. ATP- and membrane-binding protein that probably controls membrane reorganization/tubulation upon ATP hydrolysis. Plays a role in early endosomal transport. During sprouting angiogenesis, in complex with PACSIN2 and MICALL1, forms recycling endosome-like tubular structure at asymmetric adherens junctions to control CDH5 trafficking. The protein is EH domain-containing protein 4 of Mus musculus (Mouse).